A 127-amino-acid polypeptide reads, in one-letter code: Ribosome-binding factor A (127 aa).

It belongs to the RbfA family. As to quaternary structure, monomer. Binds 30S ribosomal subunits, but not 50S ribosomal subunits or 70S ribosomes.

It is found in the cytoplasm. Its function is as follows. One of several proteins that assist in the late maturation steps of the functional core of the 30S ribosomal subunit. Associates with free 30S ribosomal subunits (but not with 30S subunits that are part of 70S ribosomes or polysomes). Required for efficient processing of 16S rRNA. May interact with the 5'-terminal helix region of 16S rRNA. The protein is Ribosome-binding factor A of Glaesserella parasuis serovar 5 (strain SH0165) (Haemophilus parasuis).